Here is a 156-residue protein sequence, read N- to C-terminus: Ribosomal RNA large subunit methyltransferase H (156 aa).

S-adenosyl-L-methionine-binding positions include Leu73, Gly104, and 123–128; that span reads LSPLTL.

This sequence belongs to the RNA methyltransferase RlmH family. As to quaternary structure, homodimer.

It localises to the cytoplasm. The enzyme catalyses pseudouridine(1915) in 23S rRNA + S-adenosyl-L-methionine = N(3)-methylpseudouridine(1915) in 23S rRNA + S-adenosyl-L-homocysteine + H(+). Its function is as follows. Specifically methylates the pseudouridine at position 1915 (m3Psi1915) in 23S rRNA. The chain is Ribosomal RNA large subunit methyltransferase H from Aliivibrio fischeri (strain ATCC 700601 / ES114) (Vibrio fischeri).